The following is a 189-amino-acid chain: Apolipoprotein D (189 aa).

The first 20 residues, Met-1–Gly-20, serve as a signal peptide directing secretion. Gln-21 carries the post-translational modification Pyrrolidone carboxylic acid. Cystine bridges form between Cys-28/Cys-134 and Cys-61/Cys-185. N-linked (GlcNAc...) asparagine glycans are attached at residues Asn-65 and Asn-98.

This sequence belongs to the calycin superfamily. Lipocalin family. As to quaternary structure, homodimer. As to expression, expressed in liver, kidney, bladder, adrenal, cerebrum, duodenum, testis, lung, spleen, pancreas, heart and skin.

It is found in the secreted. Its function is as follows. APOD occurs in the macromolecular complex with lecithin-transport and binding of bilin. Appears to be able to transport a variety of ligands in a number of different contexts. In Rattus norvegicus (Rat), this protein is Apolipoprotein D (Apod).